A 357-amino-acid polypeptide reads, in one-letter code: DENN domain-containing protein 10 (357 aa).

The 136-residue stretch at 1–136 folds into the uDENN domain; that stretch reads MAAVVAMDTQ…IAVLTKGICQ (136 aa). The region spanning 152–299 is the cDENN domain; it reads KAYLAGSIKD…PEKSDSQVIQ (148 aa). One can recognise a dDENN domain in the interval 301 to 357; that stretch reads IALKTKEIFTHLAPFSEVSDDGGKVILNVEALKQQRFPPATENFLYHLAAAEQMLKV.

It belongs to the DENND10 family. In terms of assembly, interacts with the coiled-coil heterodimer of CCDC22 and CCDC93; the interaction is direct. Interacts with RAB27A and RAB27B (GDP-bound forms preferentially).

The protein resides in the late endosome. Guanine nucleotide exchange factor (GEF) regulating homeostasis of late endocytic pathway, including endosomal positioning, maturation and secretion, possibly through activating Rab proteins such as RAB27A and RAB27B. Promotes the exchange of GDP to GTP, converting inactive GDP-bound RAB27A and RAB27B into their active GTP-bound form. This Mus musculus (Mouse) protein is DENN domain-containing protein 10.